Reading from the N-terminus, the 411-residue chain is Prostaglandin E2 receptor EP3 subtype (411 aa).

At M1 to A49 the chain is on the extracellular side. N18 and N32 each carry an N-linked (GlcNAc...) asparagine glycan. A helical membrane pass occupies residues F50 to R74. At R75–C87 the chain is on the cytoplasmic side. A helical transmembrane segment spans residues I88–L108. Residues V109–T127 are Extracellular-facing. C126 and C204 are disulfide-bonded. The chain crosses the membrane as a helical span at residues F128–V149. At E150–R171 the chain is on the cytoplasmic side. A helical membrane pass occupies residues A172 to G193. The Extracellular segment spans residues Q194 to N223. Residue N213 is glycosylated (N-linked (GlcNAc...) asparagine). A helical membrane pass occupies residues L224 to I249. Residues K250–Q279 are Cytoplasmic-facing. A helical membrane pass occupies residues L280 to F303. At N304 to F323 the chain is on the extracellular side. Residues F324–L345 form a helical membrane-spanning segment. Residues R346 to Q411 are Cytoplasmic-facing. Residues I367–K390 are compositionally biased toward basic and acidic residues. The interval I367–I392 is disordered.

Belongs to the G-protein coupled receptor 1 family. In terms of assembly, interacts (via C-terminus) with MKLN1. In terms of tissue distribution, in the kidney cortex and medulla, adrenal gland and stomach. In kidney, expression is higher in tubules in the outer medulla, with lower levels in cortex. In kidney cortex, expression is restricted to distal tubules.

Its subcellular location is the cell membrane. In terms of biological role, receptor for prostaglandin E2 (PGE2). Required for normal development of fever in response to pyrinogens, including IL1B, prostaglandin E2 and bacterial lipopolysaccharide (LPS). Required for normal potentiation of platelet aggregation by prostaglandin E2, and thus plays a role in the regulation of blood coagulation. Required for increased HCO3(-) secretion in the duodenum in response to mucosal acidification, and thereby contributes to the protection of the mucosa against acid-induced ulceration. Not required for normal kidney function, normal urine volume and osmolality. The polypeptide is Prostaglandin E2 receptor EP3 subtype (PTGER3) (Oryctolagus cuniculus (Rabbit)).